A 429-amino-acid chain; its full sequence is UDP-N-acetylglucosamine 1-carboxyvinyltransferase 2 (429 aa).

K22–N23 contacts phosphoenolpyruvate. Residue R93 coordinates UDP-N-acetyl-alpha-D-glucosamine. C117 acts as the Proton donor in catalysis. C117 bears the 2-(S-cysteinyl)pyruvic acid O-phosphothioketal mark. UDP-N-acetyl-alpha-D-glucosamine-binding positions include R122 to Q126, D305, and I327.

This sequence belongs to the EPSP synthase family. MurA subfamily.

The protein localises to the cytoplasm. It catalyses the reaction phosphoenolpyruvate + UDP-N-acetyl-alpha-D-glucosamine = UDP-N-acetyl-3-O-(1-carboxyvinyl)-alpha-D-glucosamine + phosphate. Its pathway is cell wall biogenesis; peptidoglycan biosynthesis. Cell wall formation. Adds enolpyruvyl to UDP-N-acetylglucosamine. This chain is UDP-N-acetylglucosamine 1-carboxyvinyltransferase 2, found in Bacillus cereus (strain ATCC 14579 / DSM 31 / CCUG 7414 / JCM 2152 / NBRC 15305 / NCIMB 9373 / NCTC 2599 / NRRL B-3711).